The primary structure comprises 490 residues: NAI2-like protein (490 aa).

An N-terminal signal peptide occupies residues 1–24 (MGRKYVVLGLAVCLFLSSFNEVSC). 2 disordered regions span residues 43–83 (EEGE…VDKF) and 155–206 (AATN…FNKG). Residues 136 to 163 (IADERRQRLEDIERKLKAAAATNIVVED) are a coiled coil. Residues 171–183 (KVEETQEVVKFES) show a composition bias toward basic and acidic residues. The segment covering 184–199 (ESSSASSESRRQSSSS) has biased composition (low complexity). A coiled-coil region spans residues 433–465 (TFEKTVANLSRVIEEASQAYEEYHVVVRKWKEE).

This is NAI2-like protein from Arabidopsis thaliana (Mouse-ear cress).